The primary structure comprises 161 residues: Zinc finger A20 and AN1 domain-containing stress-associated protein 9 (161 aa).

The A20-type zinc-finger motif lies at 17–51 (PEAPILCVNNCGFFGSSMTNNMCSKCYRDFVKVTT). Zn(2+)-binding residues include C23, C27, C39, and C42. A disordered region spans residues 62–99 (FTPASSSKTPLEPAKPDEVPAAAVEDKQAAQEPPKPPS). Residues 75-90 (AKPDEVPAAAVEDKQA) are compositionally biased toward basic and acidic residues. The segment at 96–142 (KPPSNRCLSCRKKVGLTGFQCRCGGTFCSTHRYTEAHDCTFDYKKAG) adopts an AN1-type zinc-finger fold. 8 residues coordinate Zn(2+): C102, C105, C116, C118, C123, H126, H132, and C134.

Functionally, may be involved in environmental stress response. In Oryza sativa subsp. japonica (Rice), this protein is Zinc finger A20 and AN1 domain-containing stress-associated protein 9 (SAP9).